Reading from the N-terminus, the 271-residue chain is Formamidopyrimidine-DNA glycosylase (271 aa).

The active-site Schiff-base intermediate with DNA is P2. E3 functions as the Proton donor in the catalytic mechanism. The active-site Proton donor; for beta-elimination activity is the K57. DNA is bound by residues H90, R109, and R151. An FPG-type zinc finger spans residues 236 to 270; it reads MVYGRAGEACVTCKTKLQEIRQSNRSSVFCPSCQQ. Catalysis depends on R260, which acts as the Proton donor; for delta-elimination activity.

It belongs to the FPG family. In terms of assembly, monomer. Requires Zn(2+) as cofactor.

The catalysed reaction is Hydrolysis of DNA containing ring-opened 7-methylguanine residues, releasing 2,6-diamino-4-hydroxy-5-(N-methyl)formamidopyrimidine.. It carries out the reaction 2'-deoxyribonucleotide-(2'-deoxyribose 5'-phosphate)-2'-deoxyribonucleotide-DNA = a 3'-end 2'-deoxyribonucleotide-(2,3-dehydro-2,3-deoxyribose 5'-phosphate)-DNA + a 5'-end 5'-phospho-2'-deoxyribonucleoside-DNA + H(+). Its function is as follows. Involved in base excision repair of DNA damaged by oxidation or by mutagenic agents. Acts as a DNA glycosylase that recognizes and removes damaged bases. Has a preference for oxidized purines, such as 7,8-dihydro-8-oxoguanine (8-oxoG). Has AP (apurinic/apyrimidinic) lyase activity and introduces nicks in the DNA strand. Cleaves the DNA backbone by beta-delta elimination to generate a single-strand break at the site of the removed base with both 3'- and 5'-phosphates. This is Formamidopyrimidine-DNA glycosylase from Colwellia psychrerythraea (strain 34H / ATCC BAA-681) (Vibrio psychroerythus).